Consider the following 517-residue polypeptide: Acyltransferase AFT15-1 (517 aa).

H180 acts as the Proton acceptor in catalysis.

This sequence belongs to the plant acyltransferase family.

Its pathway is mycotoxin biosynthesis. Its function is as follows. Acyltransferase; part of the gene clusters that mediate the biosynthesis of the host-selective toxins (HSTs) AF-toxins responsible for Alternaria black spot of strawberry disease by the strawberry pathotype. AF-toxin I and III are valine derivatives of 2,3-dyhydroxy-isovaleric acid and 2-hydroxy-isovaleric acid respectively, while AF II is an isoleucine derivative of 2-hydroxy-valeric acid. These derivatives are bound to a 9,10-epoxy-8-hydroxy-9-methyl-decatrienoic acid (EDA) moiety. On cellular level, AF-toxins affect plasma membrane of susceptible cells and cause a sudden increase in loss of K(+) after a few minutes of toxin treatment. The aldo-keto reductase AFTS1 catalyzes the conversion of 2-keto-isovaleric acid (2-KIV) to 2-hydroxy-isovaleric acid (2-HIV) by reduction of its ketone to an alcohol. The acyl-CoA ligase AFT1, the hydrolase AFT2 and the enoyl-CoA hydratases AFT3 and AFT6, but also the polyketide synthase AFT9, the acyl-CoA dehydrogenase AFT10, the cytochrome P450 monooxygenase AFT11 and the oxidoreductase AFT12 are all involved in the biosynthesis of the AK-, AF- and ACT-toxin common EDA structural moiety. The exact function of each enzyme, and of additional enzymes identified within the AF-toxin clusters have still to be determined. The sequence is that of Acyltransferase AFT15-1 (AFT15-1) from Alternaria alternata (Alternaria rot fungus).